A 190-amino-acid polypeptide reads, in one-letter code: Imidazoleglycerol-phosphate dehydratase (190 aa).

Belongs to the imidazoleglycerol-phosphate dehydratase family.

Its subcellular location is the cytoplasm. The catalysed reaction is D-erythro-1-(imidazol-4-yl)glycerol 3-phosphate = 3-(imidazol-4-yl)-2-oxopropyl phosphate + H2O. It functions in the pathway amino-acid biosynthesis; L-histidine biosynthesis; L-histidine from 5-phospho-alpha-D-ribose 1-diphosphate: step 6/9. The sequence is that of Imidazoleglycerol-phosphate dehydratase from Campylobacter fetus subsp. fetus (strain 82-40).